Here is a 525-residue protein sequence, read N- to C-terminus: Protein-export membrane protein SecD (525 aa).

A run of 6 helical transmembrane segments spans residues Val16–Thr36, Gln368–Tyr388, Ile395–Ile415, Leu421–Ile441, Ala466–Val486, and Phe488–Leu508.

The protein belongs to the SecD/SecF family. SecD subfamily. Part of the protein translocation apparatus. Forms a complex with SecF.

It localises to the cell membrane. Functionally, involved in protein export. The chain is Protein-export membrane protein SecD from Thermococcus gammatolerans (strain DSM 15229 / JCM 11827 / EJ3).